We begin with the raw amino-acid sequence, 293 residues long: Ribosomal protein L11 methyltransferase (293 aa).

Positions 145, 166, 188, and 230 each coordinate S-adenosyl-L-methionine.

The protein belongs to the methyltransferase superfamily. PrmA family.

Its subcellular location is the cytoplasm. It catalyses the reaction L-lysyl-[protein] + 3 S-adenosyl-L-methionine = N(6),N(6),N(6)-trimethyl-L-lysyl-[protein] + 3 S-adenosyl-L-homocysteine + 3 H(+). Methylates ribosomal protein L11. This chain is Ribosomal protein L11 methyltransferase, found in Actinobacillus pleuropneumoniae serotype 5b (strain L20).